A 463-amino-acid polypeptide reads, in one-letter code: Type II NADH:quinone oxidoreductase Ndh (463 aa).

FAD-binding positions include 21 to 25 and Val-89; that span reads GSGFG. Glu-184 is a catalytic residue. FAD is bound by residues Asp-322 and 333–334; that span reads AQ. Residues 387–407 traverse the membrane as a helical segment; the sequence is FSGFIAWLIWLVLHLAYLIGF.

Belongs to the NADH dehydrogenase family. The cofactor is FAD.

It is found in the cell inner membrane. It carries out the reaction a quinone + NADH + H(+) = a quinol + NAD(+). The enzyme catalyses a menaquinone + NADH + H(+) = a menaquinol + NAD(+). It catalyses the reaction a ubiquinone + NADH + H(+) = a ubiquinol + NAD(+). Its activity is regulated as follows. Inhibited by phenothiazine analogs. Inhibited by 2-mercapto-quinazolinones. Not inhibited by classic inhibitors of type I NADH dehydrogenase, such as rotenone, piericidin A and pyridaben. In terms of biological role, alternative, nonproton pumping NADH:quinone oxidoreductase that delivers electrons to the respiratory chain by oxidation of NADH and reduction of quinones. Ndh is probably the main NADH dehydrogenase of M.tuberculosis. This chain is Type II NADH:quinone oxidoreductase Ndh, found in Mycobacterium tuberculosis (strain ATCC 25618 / H37Rv).